A 184-amino-acid chain; its full sequence is Protein PPLZ12 (184 aa).

The protein is Protein PPLZ12 (PPLZ12) of Lupinus polyphyllus (Large-leaved lupine).